Consider the following 750-residue polypeptide: Photosystem I P700 chlorophyll a apoprotein A1 (750 aa).

Helical transmembrane passes span 70 to 93, 156 to 179, 195 to 219, 291 to 309, 346 to 369, 385 to 411, 433 to 455, and 531 to 549; these read IFSA…FHGA, LYCT…FHYH, LNHH…HVSL, IAHH…GHMY, WHAQ…HHMY, LSLF…IFMV, AIIS…LYIH, and FLVH…LILL. [4Fe-4S] cluster is bound by residues Cys-573 and Cys-582. The next 2 membrane-spanning stretches (helical) occupy residues 589–610 and 664–686; these read HVFL…HFSW and LSAY…MFLF. His-675 contributes to the chlorophyll a' binding site. Chlorophyll a is bound by residues Met-683 and Tyr-691. Trp-692 serves as a coordination point for phylloquinone. A helical membrane pass occupies residues 724–744; that stretch reads AVGVTHYLLGGIATTWAFFLA.

Belongs to the PsaA/PsaB family. The PsaA/B heterodimer binds the P700 chlorophyll special pair and subsequent electron acceptors. PSI consists of a core antenna complex that captures photons, and an electron transfer chain that converts photonic excitation into a charge separation. The eukaryotic PSI reaction center is composed of at least 11 subunits. P700 is a chlorophyll a/chlorophyll a' dimer, A0 is one or more chlorophyll a, A1 is one or both phylloquinones and FX is a shared 4Fe-4S iron-sulfur center. serves as cofactor.

It is found in the plastid. The protein resides in the chloroplast thylakoid membrane. It catalyses the reaction reduced [plastocyanin] + hnu + oxidized [2Fe-2S]-[ferredoxin] = oxidized [plastocyanin] + reduced [2Fe-2S]-[ferredoxin]. Its function is as follows. PsaA and PsaB bind P700, the primary electron donor of photosystem I (PSI), as well as the electron acceptors A0, A1 and FX. PSI is a plastocyanin-ferredoxin oxidoreductase, converting photonic excitation into a charge separation, which transfers an electron from the donor P700 chlorophyll pair to the spectroscopically characterized acceptors A0, A1, FX, FA and FB in turn. Oxidized P700 is reduced on the lumenal side of the thylakoid membrane by plastocyanin. The sequence is that of Photosystem I P700 chlorophyll a apoprotein A1 from Gossypium hirsutum (Upland cotton).